The primary structure comprises 216 residues: Phosphoenolpyruvate guanylyltransferase (216 aa).

Positions 150, 165, and 168 each coordinate phosphoenolpyruvate.

This sequence belongs to the CofC family.

The catalysed reaction is phosphoenolpyruvate + GTP + H(+) = enolpyruvoyl-2-diphospho-5'-guanosine + diphosphate. It participates in cofactor biosynthesis; coenzyme F420 biosynthesis. Functionally, guanylyltransferase that catalyzes the activation of phosphoenolpyruvate (PEP) as enolpyruvoyl-2-diphospho-5'-guanosine, via the condensation of PEP with GTP. It is involved in the biosynthesis of coenzyme F420, a hydride carrier cofactor. This is Phosphoenolpyruvate guanylyltransferase from Mycobacterium leprae (strain Br4923).